Reading from the N-terminus, the 1116-residue chain is MAP kinase kinase kinase mkh1 (1116 aa).

Disordered stretches follow at residues 510–601 (LKMP…SNSL) and 618–647 (ALDESDLSGDPFWAIQPKQSSSQVPKENHH). Over residues 515-531 (NSGSSAPQSPSSNTSAS) the composition is skewed to low complexity. Basic residues predominate over residues 553-569 (LRRKNTLTRRPSIRHAR). Low complexity predominate over residues 588–601 (SFDPKASSKSSNSL). Over residues 634-647 (PKQSSSQVPKENHH) the composition is skewed to polar residues. A Protein kinase domain is found at 825–1094 (WMKGELIGNG…AEELLNHPFM (270 aa)). Residues 831-839 (IGNGTYGKV) and K854 each bind ATP. The Proton acceptor role is filled by D955.

The protein belongs to the protein kinase superfamily. STE Ser/Thr protein kinase family. MAP kinase kinase kinase subfamily.

The enzyme catalyses L-seryl-[protein] + ATP = O-phospho-L-seryl-[protein] + ADP + H(+). It carries out the reaction L-threonyl-[protein] + ATP = O-phospho-L-threonyl-[protein] + ADP + H(+). Functionally, may regulate cell morphology, cell wall integrity, salt resistance, cell cycle reentry from stationary-phase arrest, and filamentous growth in response to stress. Activates the MAP kinase kinase skh1/pek1 by phosphorylation. The chain is MAP kinase kinase kinase mkh1 (mkh1) from Schizosaccharomyces pombe (strain 972 / ATCC 24843) (Fission yeast).